A 40-amino-acid polypeptide reads, in one-letter code: Photosystem II reaction center protein J (40 aa).

The helical transmembrane segment at 8–28 threads the bilayer; the sequence is IPLWLIGTIAGILVIGLVGIF.

The protein belongs to the PsbJ family. PSII is composed of 1 copy each of membrane proteins PsbA, PsbB, PsbC, PsbD, PsbE, PsbF, PsbH, PsbI, PsbJ, PsbK, PsbL, PsbM, PsbT, PsbX, PsbY, PsbZ, Psb30/Ycf12, at least 3 peripheral proteins of the oxygen-evolving complex and a large number of cofactors. It forms dimeric complexes.

It is found in the plastid. It localises to the chloroplast thylakoid membrane. One of the components of the core complex of photosystem II (PSII). PSII is a light-driven water:plastoquinone oxidoreductase that uses light energy to abstract electrons from H(2)O, generating O(2) and a proton gradient subsequently used for ATP formation. It consists of a core antenna complex that captures photons, and an electron transfer chain that converts photonic excitation into a charge separation. The polypeptide is Photosystem II reaction center protein J (Anthoceros angustus (Hornwort)).